The chain runs to 155 residues: Conopressin/neurophysin (155 aa).

Positions 1–26 are cleaved as a signal peptide; that stretch reads MMSSLCGMPLTYLLTAAVLSLSLTDA. An intrachain disulfide couples Cys-27 to Cys-32. At Gly-35 the chain carries Glycine amide. Cystine bridges form between Cys-50–Cys-94, Cys-53–Cys-67, Cys-61–Cys-84, Cys-68–Cys-74, Cys-101–Cys-115, Cys-109–Cys-127, and Cys-116–Cys-121. An N-linked (GlcNAc...) asparagine glycan is attached at Asn-88.

The protein belongs to the vasopressin/oxytocin family. In terms of processing, seven disulfide bonds are present in neurophysin.

Its subcellular location is the secreted. The polypeptide is Conopressin/neurophysin (Lymnaea stagnalis (Great pond snail)).